Here is a 167-residue protein sequence, read N- to C-terminus: MEKVVDLFGVGEANSQKLLEGGKDLSEIQQGLFIGSVAEANNKDFLKSSNITHVLTVAVALAPPYPDDFVYKVIEVVDRSETDLTVYFDECYSFIDQAIQSGGGVLVHCFMGMSRSVTIVVAYLMKKHGMGFSKAMELVRSRRHQAYPNPGFISQLQQFEKSIQGNA.

The 142-residue stretch at 24–165 (DLSEIQQGLF…LQQFEKSIQG (142 aa)) folds into the Tyrosine-protein phosphatase domain. C109 serves as the catalytic Phosphocysteine intermediate.

The protein belongs to the protein-tyrosine phosphatase family. Non-receptor class dual specificity subfamily. In terms of assembly, associates with MPK3 and MPK6. Interacts with MPK6 is promoted during HR-like responses triggered by fungal elicitors, whereas interaction with MPK3 in repressed. As to expression, expressed in flowers, seedlings, roots, leaves, and seeds. Present in stomata and meristematic cells.

The protein resides in the nucleus. It is found in the cytoplasm. It catalyses the reaction O-phospho-L-tyrosyl-[protein] + H2O = L-tyrosyl-[protein] + phosphate. The enzyme catalyses O-phospho-L-seryl-[protein] + H2O = L-seryl-[protein] + phosphate. It carries out the reaction O-phospho-L-threonyl-[protein] + H2O = L-threonyl-[protein] + phosphate. Its function is as follows. Has a dual specificity toward Ser/Thr and Tyr-containing proteins. Prevents biotic and abiotic stress responses, including ozone, oxidative stress and pathogen attacks; represses MAPK activities during hypersensitive response to limit the spread of the HR response after infection by necrotrophic pathogen such as Botrytis cinerea. May be also involved in ABA and salt responses. Dephosphorylates MPK3 and MPK6. The protein is Dual specificity protein phosphatase 1B (DSPTP1B) of Arabidopsis thaliana (Mouse-ear cress).